Consider the following 321-residue polypeptide: Probable 3-hydroxyisobutyrate dehydrogenase, mitochondrial (321 aa).

NAD(+) contacts are provided by residues 23 to 52, 86 to 87, and T117; these read KTVG…IVFD and LP. K192 is a catalytic residue. NAD(+) is bound at residue K267.

This sequence belongs to the HIBADH-related family. 3-hydroxyisobutyrate dehydrogenase subfamily.

The protein localises to the mitochondrion. It carries out the reaction 3-hydroxy-2-methylpropanoate + NAD(+) = 2-methyl-3-oxopropanoate + NADH + H(+). Its pathway is amino-acid degradation; L-valine degradation. The chain is Probable 3-hydroxyisobutyrate dehydrogenase, mitochondrial (hibA) from Dictyostelium discoideum (Social amoeba).